Reading from the N-terminus, the 706-residue chain is Forkhead box protein P2 (706 aa).

Residues 1 to 28 (MMQESATETISNSSMNQNGMSTLSSQLD) are compositionally biased toward polar residues. Disordered regions lie at residues 1–45 (MMQE…SEVS) and 275–305 (IKHGGLDLTTNISSSTTSTTTSKASPPITHH). The span at 287–296 (SSSTTSTTTS) shows a compositional bias: low complexity. A C2H2-type zinc finger spans residues 337-362 (GVCKWPGCENICEDFGQFLKHLNNEH). The leucine-zipper stretch occupies residues 379 to 400 (VQQLEIQLSKERERLQAMMTHL). The interval 413 to 417 (PLNLV) is ctbp1-binding. A DNA-binding region (fork-head) is located at residues 495-585 (RPPFTYATLI…SQKITASPTL (91 aa)). The tract at residues 672 to 706 (DDEDCPMSLVTTANHSPELEEDRELEEEPLSEDLE) is disordered. Acidic residues predominate over residues 690-706 (LEEDRELEEEPLSEDLE).

As to quaternary structure, dimerization is required for DNA-binding. In terms of tissue distribution, at stage 15, expressed in the anterior/superior eye field and the caudal branchial arch. At later stages, expression persists in the retina and in the caudal branchial arch. Expressed in the pronephros and the tip of the tail. Beginning with stage 35, expression in the brain is localized to distinct subdomains of the anterior prosencephalon, the medial mesencephalon and to lateral domains of the hindbrain.

The protein localises to the nucleus. In terms of biological role, transcriptional repressor. This is Forkhead box protein P2 from Xenopus laevis (African clawed frog).